The chain runs to 88 residues: Large ribosomal subunit protein bL31B (88 aa).

This sequence belongs to the bacterial ribosomal protein bL31 family. Type B subfamily. As to quaternary structure, part of the 50S ribosomal subunit.

The polypeptide is Large ribosomal subunit protein bL31B (Bordetella pertussis (strain Tohama I / ATCC BAA-589 / NCTC 13251)).